Here is a 55-residue protein sequence, read N- to C-terminus: Large ribosomal subunit protein bL32 (55 aa).

A compositionally biased stretch (basic residues) spans 1-19 (MAVPKRRMSRANTHTRRSQ). The tract at residues 1–21 (MAVPKRRMSRANTHTRRSQWK) is disordered.

It belongs to the bacterial ribosomal protein bL32 family.

In Corynebacterium kroppenstedtii (strain DSM 44385 / JCM 11950 / CIP 105744 / CCUG 35717), this protein is Large ribosomal subunit protein bL32.